The chain runs to 228 residues: Cytochrome b5 domain-containing protein 1 (228 aa).

Positions R17–H83 constitute a Cytochrome b5 heme-binding domain. Residue H83 participates in heme binding.

The protein belongs to the cytochrome b5 family.

The protein localises to the cytoplasm. The protein resides in the cytoskeleton. It is found in the cilium axoneme. Its function is as follows. Radial spoke stalk protein that binds heme under oxidizing conditions. Required for the coordinated beating of multiple cilia maybe by functioning in a redox signaling pathway. This Mus musculus (Mouse) protein is Cytochrome b5 domain-containing protein 1 (Cyb5d1).